A 181-amino-acid polypeptide reads, in one-letter code: Protein GrpE (181 aa).

This sequence belongs to the GrpE family. Homodimer.

It localises to the cytoplasm. Functionally, participates actively in the response to hyperosmotic and heat shock by preventing the aggregation of stress-denatured proteins, in association with DnaK and GrpE. It is the nucleotide exchange factor for DnaK and may function as a thermosensor. Unfolded proteins bind initially to DnaJ; upon interaction with the DnaJ-bound protein, DnaK hydrolyzes its bound ATP, resulting in the formation of a stable complex. GrpE releases ADP from DnaK; ATP binding to DnaK triggers the release of the substrate protein, thus completing the reaction cycle. Several rounds of ATP-dependent interactions between DnaJ, DnaK and GrpE are required for fully efficient folding. The sequence is that of Protein GrpE from Delftia acidovorans (strain DSM 14801 / SPH-1).